The primary structure comprises 226 residues: 2-C-methyl-D-erythritol 4-phosphate cytidylyltransferase (226 aa).

The protein belongs to the IspD/TarI cytidylyltransferase family. IspD subfamily.

It catalyses the reaction 2-C-methyl-D-erythritol 4-phosphate + CTP + H(+) = 4-CDP-2-C-methyl-D-erythritol + diphosphate. It functions in the pathway isoprenoid biosynthesis; isopentenyl diphosphate biosynthesis via DXP pathway; isopentenyl diphosphate from 1-deoxy-D-xylulose 5-phosphate: step 2/6. Functionally, catalyzes the formation of 4-diphosphocytidyl-2-C-methyl-D-erythritol from CTP and 2-C-methyl-D-erythritol 4-phosphate (MEP). The protein is 2-C-methyl-D-erythritol 4-phosphate cytidylyltransferase of Prochlorococcus marinus (strain MIT 9312).